A 61-amino-acid polypeptide reads, in one-letter code: Small ribosomal subunit protein bS21 (61 aa).

The segment at 34 to 61 (KREHYESPSVKRKKKSEAARKRKYKYNK) is disordered. Over residues 43–61 (VKRKKKSEAARKRKYKYNK) the composition is skewed to basic residues.

Belongs to the bacterial ribosomal protein bS21 family.

In Thermoanaerobacter pseudethanolicus (strain ATCC 33223 / 39E) (Clostridium thermohydrosulfuricum), this protein is Small ribosomal subunit protein bS21.